A 248-amino-acid polypeptide reads, in one-letter code: 2,3-bisphosphoglycerate-dependent phosphoglycerate mutase (248 aa).

Residues 8 to 15, 21 to 22, Arg-60, 87 to 90, Lys-98, 114 to 115, and 183 to 184 contribute to the substrate site; these read RHGESEWN, TG, ERHY, RR, and GN. Residue His-9 is the Tele-phosphohistidine intermediate of the active site. Catalysis depends on Glu-87, which acts as the Proton donor/acceptor.

It belongs to the phosphoglycerate mutase family. BPG-dependent PGAM subfamily.

The catalysed reaction is (2R)-2-phosphoglycerate = (2R)-3-phosphoglycerate. It functions in the pathway carbohydrate degradation; glycolysis; pyruvate from D-glyceraldehyde 3-phosphate: step 3/5. Catalyzes the interconversion of 2-phosphoglycerate and 3-phosphoglycerate. The protein is 2,3-bisphosphoglycerate-dependent phosphoglycerate mutase of Borreliella afzelii (strain PKo) (Borrelia afzelii).